We begin with the raw amino-acid sequence, 342 residues long: MSISIEQAIIHEISQDSQGQMRCRLRPQPLLNTHAVETMLEELHQTYSGKAGKGFGFFGTHGDDGEANSEFSDALTGYRKGDLGFVEFSGQASQLLQQELAKYDFSQGGFLLMSCYTSMTSDYLFVALLSAKSSMTVLDDMELSQNNHLDLNNIQLAARIDLTEWQADKSSRKYISFIRGRAGRKVADFFLDFMGCVEGVNTKAQNKTLIHAVEDFVAGSELTKDERQDCRNKVFEYCSERADAGEVIEVKDLADELADSGMDSFYDFACGGSYELDEEFPADKASLRSLKKFSGTGGGVTLSFDGGHLGERVIYDPISDTILIKGVPANLKDQLDRRLKGE.

This sequence belongs to the YejK family.

It is found in the cytoplasm. The protein resides in the nucleoid. In Shewanella frigidimarina (strain NCIMB 400), this protein is Nucleoid-associated protein Sfri_2491.